Here is a 434-residue protein sequence, read N- to C-terminus: T-box transcription factor T homolog (434 aa).

A DNA-binding region (T-box) is located at residues leucine 50–aspartate 220. Polar residues-rich tracts occupy residues serine 355–glutamine 364 and histidine 376–leucine 385. A disordered region spans residues serine 355–leucine 385.

As to expression, in the developing embryo, expressed in the mesenchyme founder cells, vegetal plate of the mesenchyme blastula, extending tip of the invaginating archenteron and, later, in the secondary mesenchyme cells.

Its subcellular location is the nucleus. Involved in the transcriptional regulation of genes required for mesoderm differentiation. The protein is T-box transcription factor T homolog of Hemicentrotus pulcherrimus (Sea urchin).